The chain runs to 335 residues: RNA 3'-terminal phosphate cyclase (335 aa).

ATP-binding positions include glutamine 101 and histidine 282–aspartate 285. Histidine 306 acts as the Tele-AMP-histidine intermediate in catalysis.

The protein belongs to the RNA 3'-terminal cyclase family. Type 1 subfamily.

Its subcellular location is the cytoplasm. It carries out the reaction a 3'-end 3'-phospho-ribonucleotide-RNA + ATP = a 3'-end 2',3'-cyclophospho-ribonucleotide-RNA + AMP + diphosphate. Catalyzes the conversion of 3'-phosphate to a 2',3'-cyclic phosphodiester at the end of RNA. The mechanism of action of the enzyme occurs in 3 steps: (A) adenylation of the enzyme by ATP; (B) transfer of adenylate to an RNA-N3'P to produce RNA-N3'PP5'A; (C) and attack of the adjacent 2'-hydroxyl on the 3'-phosphorus in the diester linkage to produce the cyclic end product. The biological role of this enzyme is unknown but it is likely to function in some aspects of cellular RNA processing. This chain is RNA 3'-terminal phosphate cyclase, found in Sulfolobus acidocaldarius (strain ATCC 33909 / DSM 639 / JCM 8929 / NBRC 15157 / NCIMB 11770).